The primary structure comprises 348 residues: Short-wave-sensitive opsin 1 (348 aa).

Residues 1–33 (MRKMSEEEFYLFKNISSVGPWDGPQYHIAPVWA) lie on the Extracellular side of the membrane. Asparagine 14 is a glycosylation site (N-linked (GlcNAc...) asparagine). Residues 34 to 58 (FYLQAAFMGTVFLIGFPLNAMVLVA) form a helical membrane-spanning segment. The Cytoplasmic segment spans residues 59–70 (TLRYKKLRQPLN). Residues 71 to 96 (YILVNVSFGGFLLCIFSVFPVFVASC) traverse the membrane as a helical segment. The Extracellular segment spans residues 97–110 (NGYFVFGRHVCALE). Cysteine 107 and cysteine 184 are disulfide-bonded. The helical transmembrane segment at 111 to 130 (GFLGTVAGLVTGWSLAFLAF) threads the bilayer. Over 131-149 (ERYIVICKPFGNFRFSSKH) the chain is Cytoplasmic. The chain crosses the membrane as a helical span at residues 150-173 (ALTVVLATWTIGIGVSIPPFFGWS). Over 174 to 199 (RFIPEGLQCSCGPDWYTVGTKYRSES) the chain is Extracellular. A helical membrane pass occupies residues 200–227 (YTWFLFIFCFIVPLSLICFSYTQLLRAL). The Cytoplasmic portion of the chain corresponds to 228–249 (KAVAAQQQESATTQKAEREVSR). A helical transmembrane segment spans residues 250–273 (MVVVMVGSFCVCYVPYAAFAMYMV). At 274–281 (NNRNHGLD) the chain is on the extracellular side. The chain crosses the membrane as a helical span at residues 282-306 (LRLVTIPSFFSKSACIYNPIIYCFM). N6-(retinylidene)lysine is present on lysine 293. The Cytoplasmic portion of the chain corresponds to 307–348 (NKQFQACIMKMVCGKAMTDESDTCSSQKTEVSTVSSTQVGPN).

Belongs to the G-protein coupled receptor 1 family. Opsin subfamily. Post-translationally, phosphorylated on some or all of the serine and threonine residues present in the C-terminal region.

It localises to the cell membrane. The protein localises to the photoreceptor inner segment. Its subcellular location is the cell projection. The protein resides in the cilium. It is found in the photoreceptor outer segment. It localises to the cytoplasm. The protein localises to the perinuclear region. Visual pigments are the light-absorbing molecules that mediate vision. They consist of an apoprotein, opsin, covalently linked to cis-retinal. Required for the maintenance of cone outer segment organization in the ventral retina, but not essential for the maintenance of functioning cone photoreceptors. Involved in ensuring correct abundance and localization of retinal membrane proteins. May increase spectral sensitivity in dim light. The sequence is that of Short-wave-sensitive opsin 1 (OPN1SW) from Pan paniscus (Pygmy chimpanzee).